The following is a 193-amino-acid chain: Ion-translocating oxidoreductase complex subunit A (193 aa).

The next 6 helical transmembrane spans lie at 5-25, 39-59, 62-82, 102-122, 134-154, and 172-192; these read ALLLLSTALVNNVVLVKFLGL, LGMGLATTFVITLAAAASWML, WLLAPFDLGFLRILSFILVIA, SLGIYLPLITTNCAVLGVALL, VLFGFGSALGFTLVLLIFAGL, and AAFITISLLSLAFMGLSGLVA.

It belongs to the NqrDE/RnfAE family. As to quaternary structure, the complex is composed of six subunits: RnfA, RnfB, RnfC, RnfD, RnfE and RnfG.

The protein resides in the cell inner membrane. Functionally, part of a membrane-bound complex that couples electron transfer with translocation of ions across the membrane. The protein is Ion-translocating oxidoreductase complex subunit A of Aromatoleum aromaticum (strain DSM 19018 / LMG 30748 / EbN1) (Azoarcus sp. (strain EbN1)).